A 103-amino-acid chain; its full sequence is Large ribosomal subunit protein bL28 (103 aa).

This sequence belongs to the bacterial ribosomal protein bL28 family.

This chain is Large ribosomal subunit protein bL28, found in Anaplasma phagocytophilum (strain HZ).